Reading from the N-terminus, the 400-residue chain is Formate-dependent phosphoribosylglycinamide formyltransferase (400 aa).

N(1)-(5-phospho-beta-D-ribosyl)glycinamide is bound by residues 22-23 (EL) and glutamate 82. Residues arginine 115, lysine 156, 161 to 166 (SSGKGQ), 196 to 199 (EGFI), and glutamate 204 each bind ATP. Positions 120–309 (RLAAETLGLP…EFALHARAIL (190 aa)) constitute an ATP-grasp domain. Residues glutamate 268 and glutamate 280 each coordinate Mg(2+). Residues aspartate 287, lysine 361, and 368 to 369 (RR) each bind N(1)-(5-phospho-beta-D-ribosyl)glycinamide.

This sequence belongs to the PurK/PurT family. Homodimer.

The catalysed reaction is N(1)-(5-phospho-beta-D-ribosyl)glycinamide + formate + ATP = N(2)-formyl-N(1)-(5-phospho-beta-D-ribosyl)glycinamide + ADP + phosphate + H(+). It participates in purine metabolism; IMP biosynthesis via de novo pathway; N(2)-formyl-N(1)-(5-phospho-D-ribosyl)glycinamide from N(1)-(5-phospho-D-ribosyl)glycinamide (formate route): step 1/1. Involved in the de novo purine biosynthesis. Catalyzes the transfer of formate to 5-phospho-ribosyl-glycinamide (GAR), producing 5-phospho-ribosyl-N-formylglycinamide (FGAR). Formate is provided by PurU via hydrolysis of 10-formyl-tetrahydrofolate. This chain is Formate-dependent phosphoribosylglycinamide formyltransferase, found in Xanthomonas axonopodis pv. citri (strain 306).